The primary structure comprises 362 residues: Sulfate/thiosulfate import ATP-binding protein CysA (362 aa).

The region spanning 3–237 is the ABC transporter domain; sequence IEINNISKYF…PASRFVMEFL (235 aa). Residue 35–42 participates in ATP binding; that stretch reads GPSGSGKT.

Belongs to the ABC transporter superfamily. Sulfate/tungstate importer (TC 3.A.1.6) family. The complex is composed of two ATP-binding proteins (CysA), two transmembrane proteins (CysT and CysW) and a solute-binding protein (CysP).

The protein localises to the cell inner membrane. The enzyme catalyses sulfate(out) + ATP + H2O = sulfate(in) + ADP + phosphate + H(+). The catalysed reaction is thiosulfate(out) + ATP + H2O = thiosulfate(in) + ADP + phosphate + H(+). Its function is as follows. Part of the ABC transporter complex CysAWTP involved in sulfate/thiosulfate import. Responsible for energy coupling to the transport system. This Photorhabdus laumondii subsp. laumondii (strain DSM 15139 / CIP 105565 / TT01) (Photorhabdus luminescens subsp. laumondii) protein is Sulfate/thiosulfate import ATP-binding protein CysA.